Here is a 401-residue protein sequence, read N- to C-terminus: UDP-N-acetylglucosamine--N-acetylmuramyl-(pentapeptide) pyrophosphoryl-undecaprenol N-acetylglucosamine transferase (401 aa).

Residues Met-1 to Glu-24 are disordered. Residues Thr-39–Gly-41, Asn-157, Arg-194, Ser-228, and Gln-324 contribute to the UDP-N-acetyl-alpha-D-glucosamine site.

Belongs to the glycosyltransferase 28 family. MurG subfamily.

The protein localises to the cell membrane. The enzyme catalyses di-trans,octa-cis-undecaprenyl diphospho-N-acetyl-alpha-D-muramoyl-L-alanyl-D-glutamyl-meso-2,6-diaminopimeloyl-D-alanyl-D-alanine + UDP-N-acetyl-alpha-D-glucosamine = di-trans,octa-cis-undecaprenyl diphospho-[N-acetyl-alpha-D-glucosaminyl-(1-&gt;4)]-N-acetyl-alpha-D-muramoyl-L-alanyl-D-glutamyl-meso-2,6-diaminopimeloyl-D-alanyl-D-alanine + UDP + H(+). The protein operates within cell wall biogenesis; peptidoglycan biosynthesis. Functionally, cell wall formation. Catalyzes the transfer of a GlcNAc subunit on undecaprenyl-pyrophosphoryl-MurNAc-pentapeptide (lipid intermediate I) to form undecaprenyl-pyrophosphoryl-MurNAc-(pentapeptide)GlcNAc (lipid intermediate II). This chain is UDP-N-acetylglucosamine--N-acetylmuramyl-(pentapeptide) pyrophosphoryl-undecaprenol N-acetylglucosamine transferase, found in Mycolicibacterium vanbaalenii (strain DSM 7251 / JCM 13017 / BCRC 16820 / KCTC 9966 / NRRL B-24157 / PYR-1) (Mycobacterium vanbaalenii).